The following is a 609-amino-acid chain: Myoneurin (609 aa).

In terms of domain architecture, BTB spans 24 to 89 (CDCTILIGDF…IYSGNLNYDS (66 aa)). 2 consecutive short sequence motifs (nuclear localization signal) follow at residues 172 to 188 (KKSQ…RSHQ) and 257 to 262 (QKPAKL). 8 C2H2-type zinc fingers span residues 301 to 323 (PVCN…MRIH), 329 to 351 (YVCH…VRTH), 357 to 380 (YQCK…RMHH), 386 to 408 (YKCD…ARKH), 414 to 436 (YVCD…VRRH), 442 to 464 (YVCD…ARKH), 470 to 492 (YICG…FRSH), and 498 to 521 (FVCE…LKMH). The tract at residues 528 to 553 (IEMKSAENSSSSEDSTTKSPEPESLE) is disordered. Residues 533–546 (AENSSSSEDSTTKS) show a composition bias toward low complexity.

The protein localises to the nucleus. The polypeptide is Myoneurin (mynn) (Xenopus laevis (African clawed frog)).